Consider the following 254-residue polypeptide: 5-oxoprolinase subunit A (254 aa).

It belongs to the LamB/PxpA family. In terms of assembly, forms a complex composed of PxpA, PxpB and PxpC.

The enzyme catalyses 5-oxo-L-proline + ATP + 2 H2O = L-glutamate + ADP + phosphate + H(+). Its function is as follows. Catalyzes the cleavage of 5-oxoproline to form L-glutamate coupled to the hydrolysis of ATP to ADP and inorganic phosphate. This is 5-oxoprolinase subunit A from Acinetobacter baumannii (strain AB307-0294).